The chain runs to 58 residues: Succinate dehydrogenase subunit 8B, mitochondrial (58 aa).

In terms of assembly, component of complex II composed of eight subunits in plants: four classical SDH subunits SDH1, SDH2, SDH3 and SDH4 (a flavoprotein (FP), an iron-sulfur protein (IP), and a cytochrome b composed of a large and a small subunit.), as well as four subunits unknown in mitochondria from bacteria and heterotrophic eukaryotes.

The protein resides in the mitochondrion inner membrane. The protein operates within carbohydrate metabolism; tricarboxylic acid cycle. The sequence is that of Succinate dehydrogenase subunit 8B, mitochondrial from Oryza sativa subsp. japonica (Rice).